The primary structure comprises 440 residues: Microtubule-associated tumor suppressor 1 homolog (440 aa).

Residues I106 to L401 adopt a coiled-coil conformation. A phosphoserine mark is found at S373, S394, S415, S425, S429, S431, S433, S434, and S438. The disordered stretch occupies residues G407 to R440. Residues S425–R440 are compositionally biased toward low complexity.

This sequence belongs to the MTUS1 family. Homodimer. Interacts with AGTR2. Interacts with PTPN6. As to expression, present in neurons (at protein level).

Its subcellular location is the mitochondrion. The protein resides in the golgi apparatus. The protein localises to the cell membrane. It is found in the nucleus. Cooperates with AGTR2 to inhibit ERK2 activation and cell proliferation. May be required for AGTR2 cell surface expression. Together with PTPN6, induces UBE2V2 expression upon angiotensin-II stimulation. The sequence is that of Microtubule-associated tumor suppressor 1 homolog (Mtus1) from Rattus norvegicus (Rat).